Here is a 157-residue protein sequence, read N- to C-terminus: 6,7-dimethyl-8-ribityllumazine synthase (157 aa).

5-amino-6-(D-ribitylamino)uracil contacts are provided by residues Phe22, 57–59, and 81–83; these read AYE and TVI. Residue 86-87 participates in (2S)-2-hydroxy-3-oxobutyl phosphate binding; it reads GT. Catalysis depends on His89, which acts as the Proton donor. Phe114 serves as a coordination point for 5-amino-6-(D-ribitylamino)uracil. Position 128 (Arg128) interacts with (2S)-2-hydroxy-3-oxobutyl phosphate.

Belongs to the DMRL synthase family. In terms of assembly, forms an icosahedral capsid composed of 60 subunits, arranged as a dodecamer of pentamers.

It carries out the reaction (2S)-2-hydroxy-3-oxobutyl phosphate + 5-amino-6-(D-ribitylamino)uracil = 6,7-dimethyl-8-(1-D-ribityl)lumazine + phosphate + 2 H2O + H(+). Its pathway is cofactor biosynthesis; riboflavin biosynthesis; riboflavin from 2-hydroxy-3-oxobutyl phosphate and 5-amino-6-(D-ribitylamino)uracil: step 1/2. Catalyzes the formation of 6,7-dimethyl-8-ribityllumazine by condensation of 5-amino-6-(D-ribitylamino)uracil with 3,4-dihydroxy-2-butanone 4-phosphate. This is the penultimate step in the biosynthesis of riboflavin. The sequence is that of 6,7-dimethyl-8-ribityllumazine synthase from Haemophilus influenzae (strain ATCC 51907 / DSM 11121 / KW20 / Rd).